Here is a 372-residue protein sequence, read N- to C-terminus: MENQLQNKPIIELRSIKKSYGSNTIINDFNLTINNGEFVTILGPSGCGKTTVLRLLAGLEELDSGSIILDGEDITNVPAEKRHINTVFQSYALFPHMTIFENVAFGLRMQKVPNEEIKPRVLEALRMVQLEEMADRKPTQLSGGQQQRIAIARAVVNKPKVLLLDESLSALDYKLRKQMQQELKMLQRQLGITFIFVTHDQEEAITMSDRIVLLRKGKIAQDGSPREIYEDPANLFVARFIGEINVFEATVIERKSEQVVLANVEGRICDIYTDMPVEKDQKLQVLLRPEDIVIEELDENEHSKAIIGHIIDRTYKGMTLESTVEFDHNGMRVLVSEFFNEDDPHMDHSIGQRVGITWHEGWEVVLNDEDNQ.

One can recognise an ABC transporter domain in the interval 11 to 241 (IELRSIKKSY…PANLFVARFI (231 aa)). Residue 43–50 (GPSGCGKT) participates in ATP binding.

This sequence belongs to the ABC transporter superfamily. Spermidine/putrescine importer (TC 3.A.1.11.1) family. In terms of assembly, the complex is composed of two ATP-binding proteins (PotA), two transmembrane proteins (PotB and PotC) and a solute-binding protein (PotD).

It localises to the cell inner membrane. The catalysed reaction is ATP + H2O + polyamine-[polyamine-binding protein]Side 1 = ADP + phosphate + polyamineSide 2 + [polyamine-binding protein]Side 1.. In terms of biological role, part of the ABC transporter complex PotABCD involved in spermidine/putrescine import. Responsible for energy coupling to the transport system. The polypeptide is Spermidine/putrescine import ATP-binding protein PotA (Haemophilus influenzae (strain ATCC 51907 / DSM 11121 / KW20 / Rd)).